A 364-amino-acid polypeptide reads, in one-letter code: NADH-quinone oxidoreductase subunit H (364 aa).

8 helical membrane-spanning segments follow: residues 21-41 (AGQI…LLLA), 88-108 (VFLL…AVIP), 120-140 (VGIL…IMGG), 159-179 (MVSY…LAGS), 208-228 (LPLL…GLAE), 267-287 (IVLI…APFP), 301-321 (FYYF…VSMA), and 340-360 (VFLP…VFGP).

The protein belongs to the complex I subunit 1 family. In terms of assembly, NDH-1 is composed of 14 different subunits. Subunits NuoA, H, J, K, L, M, N constitute the membrane sector of the complex.

Its subcellular location is the cell inner membrane. The catalysed reaction is a quinone + NADH + 5 H(+)(in) = a quinol + NAD(+) + 4 H(+)(out). In terms of biological role, NDH-1 shuttles electrons from NADH, via FMN and iron-sulfur (Fe-S) centers, to quinones in the respiratory chain. The immediate electron acceptor for the enzyme in this species is believed to be ubiquinone. Couples the redox reaction to proton translocation (for every two electrons transferred, four hydrogen ions are translocated across the cytoplasmic membrane), and thus conserves the redox energy in a proton gradient. This subunit may bind ubiquinone. The polypeptide is NADH-quinone oxidoreductase subunit H (Phenylobacterium zucineum (strain HLK1)).